Consider the following 1719-residue polypeptide: Serine/threonine-protein kinase MRCK alpha (1719 aa).

Positions 77–343 (FEILKVIGRG…IEDFKKHPFF (267 aa)) constitute a Protein kinase domain. ATP is bound by residues 83 to 91 (IGRGAFGEV) and lysine 106. Aspartate 201 serves as the catalytic Proton acceptor. Phosphoserine; by autocatalysis is present on residues serine 222 and serine 234. Phosphothreonine; by autocatalysis is present on threonine 240. One can recognise an AGC-kinase C-terminal domain in the interval 344–414 (SGIDWDNIRN…TSSCVLSDRS (71 aa)). Coiled-coil stretches lie at residues 437–670 (NNLA…KQKQ), 713–820 (SEIK…WEAQ), and 880–943 (LELQ…SEKG). A Phorbol-ester/DAG-type zinc finger spans residues 999-1049 (THQFFVKSFTAPTKCHQCTSLMVGLIRQGCSCEVCGFSCHITCVNKAPTVC). Positions 1069-1188 (GTAYEGHVRI…WVGVLSELHK (120 aa)) constitute a PH domain. One can recognise a CNH domain in the interval 1214–1486 (IKTTQAAAII…RPLNTEGSLN (273 aa)). Position 1532 is a phosphoserine (serine 1532). Residues 1558–1571 (ISNPTNFNHIAHMG) enclose the CRIB domain. The interval 1579 to 1719 (LKDLPMNPRP…ESTDRGSWDP (141 aa)) is disordered. Residues 1591-1606 (SRTVFSGSVSIPSITK) are compositionally biased toward polar residues. A phosphoserine mark is found at serine 1598, serine 1600, serine 1616, serine 1638, serine 1651, serine 1656, serine 1680, serine 1706, and serine 1708. The segment covering 1612 to 1627 (GRSMSASSGLSARSSA) has biased composition (low complexity). The span at 1652-1661 (PSEGSLSSGG) shows a compositional bias: low complexity.

This sequence belongs to the protein kinase superfamily. AGC Ser/Thr protein kinase family. DMPK subfamily. As to quaternary structure, homodimer and homotetramer via the coiled coil regions. Interacts tightly with GTP-bound but not GDP-bound CDC42. Forms a tripartite complex with MYO18A and LRP35A with the latter acting as an adapter connecting CDC42BPA and MYO18A. LRP35A binding results in activation of CDC42BPA by abolition of its negative autoregulation. Interacts with LURAP1. Interacts (via AGC-kinase C-terminal domain) with FAM89B/LRAP25 (via LRR repeat). Forms a tripartite complex with FAM89B/LRAP25 and LIMK1. It depends on Mg(2+) as a cofactor. Proteolytically cleaved by caspases upon apoptosis induction. The cleavage at Asp-478 by CASP3 increases its kinase activity (in vitro).

It is found in the cytoplasm. The protein resides in the cell projection. The protein localises to the lamellipodium. It catalyses the reaction L-seryl-[protein] + ATP = O-phospho-L-seryl-[protein] + ADP + H(+). The enzyme catalyses L-threonyl-[protein] + ATP = O-phospho-L-threonyl-[protein] + ADP + H(+). With respect to regulation, maintained in an inactive, closed conformation by an interaction between the kinase domain and the negative autoregulatory C-terminal coiled-coil region. Agonist binding to the phorbol ester binding site disrupts this, releasing the kinase domain to allow N-terminus-mediated dimerization and kinase activation by transautophosphorylation. Inhibited by chelerythrine chloride. Functionally, serine/threonine-protein kinase which is an important downstream effector of CDC42 and plays a role in the regulation of cytoskeleton reorganization and cell migration. Regulates actin cytoskeletal reorganization via phosphorylation of PPP1R12C and MYL9/MLC2. In concert with MYO18A and LRP35A, is involved in modulating lamellar actomyosin retrograde flow that is crucial to cell protrusion and migration. Phosphorylates: PPP1R12A and LIMK2. May play a role in TFRC-mediated iron uptake. In concert with FAM89B/LRAP25 mediates the targeting of LIMK1 to the lamellipodium resulting in its activation and subsequent phosphorylation of CFL1 which is important for lamellipodial F-actin regulation. Triggers the formation of an extrusion apical actin ring required for epithelial extrusion of apoptotic cells. The chain is Serine/threonine-protein kinase MRCK alpha (Cdc42bpa) from Mus musculus (Mouse).